The sequence spans 771 residues: Leucine-rich repeat and fibronectin type III domain-containing protein 1 (771 aa).

Residues 1 to 31 form the signal peptide; that stretch reads MAPGPFSSALLSPPPAALPFLLLLWAGASRG. One can recognise an LRRNT domain in the interval 32-65; it reads QPCPGRCICQNVAPTLTMLCAKTGLLFVPPAIDR. The Extracellular segment spans residues 32–536; the sequence is QPCPGRCICQ…LRAHFLGGTM (505 aa). LRR repeat units lie at residues 66–87, 90–111, 114–135, 138–159, 163–184, 187–208, and 211–232; these read RVVELRLTDNFIAAVRRRDFAN, SLVHLTLSRNTIGQVAAGAFAD, ALRALHLDSNRLAEVRGDQLRG, NLRHLILGNNQIRRVESAAFDA, TVEDLDLSYNNLEALPWEAVGQ, NLNTLTLDHNLIDHIAEGTFVQ, and KLVRLDMTSNRLHKLPPDGLFL. A glycan (N-linked (GlcNAc...) asparagine) is linked at Asn87. The 47-residue stretch at 252–298 folds into the LRRCT domain; that stretch reads NPLHCNCELLWLRRLTREDDLETCATPEHLTDRYFWSIPEEEFLCEP. The region spanning 299-386 is the Ig-like domain; the sequence is PLITRQAGGR…GEATAPVEVC (88 aa). Cys321 and Cys370 are disulfide-bonded. The N-linked (GlcNAc...) asparagine glycan is linked to Asn343. Positions 397–422 are disordered; sequence PAAPPPLTEPGSSDIATPGRPGANDS. The Fibronectin type-III domain maps to 424–520; it reads AERRLVAAEL…GCVQFTTAGD (97 aa). A helical membrane pass occupies residues 537-557; sequence IIAIGGVIVASVLVFIVLLMI. The Cytoplasmic segment spans residues 558-771; the sequence is RYKVYGDGDS…STEWMLESTV (214 aa). Ser613 and Ser718 each carry phosphoserine. Residues 654-743 are disordered; it reads PSEETSGEES…HLDGAGGGAA (90 aa). Positions 719–732 are enriched in basic residues; sequence YPRRARRTKRHRST. Residues 768 to 771 carry the PDZ-binding motif; sequence ESTV.

This sequence belongs to the LRFN family. As to quaternary structure, can form heteromeric complexes with LRFN2, LRFN3, LRFN4 and LRFN5. Forms homomeric complexes, but not across cell junctions. Interacts with DLG1, DLG2, DLG3 and DLG4. Interacts with 2 AMPA receptor subunits GRIA1 and GRIA2 and NMDA receptor subunit GRIN1. Post-translationally, glycosylated.

It localises to the membrane. The protein resides in the synapse. It is found in the postsynaptic density membrane. Promotes neurite outgrowth in hippocampal neurons. Involved in the regulation and maintenance of excitatory synapses. Induces the clustering of excitatory postsynaptic proteins, including DLG4, DLGAP1, GRIA1 and GRIN1. This Homo sapiens (Human) protein is Leucine-rich repeat and fibronectin type III domain-containing protein 1 (LRFN1).